We begin with the raw amino-acid sequence, 714 residues long: ATP-dependent DNA helicase DinG (714 aa).

One can recognise a Helicase ATP-binding domain in the interval alanine 17–threonine 294. ATP is bound at residue alanine 54–threonine 61. 4 residues coordinate [4Fe-4S] cluster: cysteine 120, cysteine 194, cysteine 199, and cysteine 205. The short motif at aspartate 248–histidine 251 is the DEAH box element. The region spanning histidine 517 to proline 698 is the Helicase C-terminal domain.

The protein belongs to the helicase family. DinG subfamily. Type 1 sub-subfamily. Requires [4Fe-4S] cluster as cofactor.

The catalysed reaction is Couples ATP hydrolysis with the unwinding of duplex DNA at the replication fork by translocating in the 5'-3' direction. This creates two antiparallel DNA single strands (ssDNA). The leading ssDNA polymer is the template for DNA polymerase III holoenzyme which synthesizes a continuous strand.. The enzyme catalyses ATP + H2O = ADP + phosphate + H(+). In terms of biological role, DNA-dependent ATPase and 5'-3' DNA helicase. Unwinds D-loops, R-loops, forked DNA and G-quadruplex DNA. The chain is ATP-dependent DNA helicase DinG from Salmonella typhimurium (strain LT2 / SGSC1412 / ATCC 700720).